The following is a 124-amino-acid chain: Ribonuclease pancreatic (124 aa).

The interval K1 to N24 is disordered. Substrate contacts are provided by K7 and R10. H12 functions as the Proton acceptor in the catalytic mechanism. Intrachain disulfides connect C26/C84, C40/C95, C58/C110, and C65/C72. N-linked (GlcNAc...) asparagine; in river-breed only glycosylation is present at N34. Residues K41 to T45, K66, and R85 each bind substrate. Catalysis depends on H119, which acts as the Proton donor.

This sequence belongs to the pancreatic ribonuclease family. As to quaternary structure, monomer. Interacts with and forms tight 1:1 complexes with RNH1. Dimerization of two such complexes may occur. Interaction with RNH1 inhibits this protein. Post-translationally, swamp breed ribonuclease do not bind carbohydrate, but there is evidence of a polymorphic form that does. In terms of tissue distribution, pancreas.

It is found in the secreted. It catalyses the reaction an [RNA] containing cytidine + H2O = an [RNA]-3'-cytidine-3'-phosphate + a 5'-hydroxy-ribonucleotide-3'-[RNA].. The catalysed reaction is an [RNA] containing uridine + H2O = an [RNA]-3'-uridine-3'-phosphate + a 5'-hydroxy-ribonucleotide-3'-[RNA].. In terms of biological role, endonuclease that catalyzes the cleavage of RNA on the 3' side of pyrimidine nucleotides. Acts on single-stranded and double-stranded RNA. This chain is Ribonuclease pancreatic (RNASE1), found in Bubalus bubalis (Domestic water buffalo).